We begin with the raw amino-acid sequence, 1089 residues long: Platelet-derived growth factor receptor alpha (1089 aa).

The N-terminal stretch at 1-23 (MGTSHPAFLVLGCLLTGLSLILC) is a signal peptide. Ig-like C2-type domains lie at 24–113 (QLSL…NELE), 117–201 (IYIY…FQTI), 202–306 (PFNV…KKVT), 319–410 (PTFS…FELL), and 414–517 (PSSI…LKLV). Residues 24–528 (QLSLPSILPN…PTLRSELTVA (505 aa)) lie on the Extracellular side of the membrane. N-linked (GlcNAc...) asparagine glycans are attached at residues N42, N76, N103, and N179. Cysteines 49 and 100 form a disulfide. 2 disulfide bridges follow: C150-C189 and C235-C290. Residues N353, N359, N458, and N468 are each glycosylated (N-linked (GlcNAc...) asparagine). An intrachain disulfide couples C435 to C501. The chain crosses the membrane as a helical span at residues 529–549 (AAVLVLLVIVIISLIVLVVIW). The Cytoplasmic segment spans residues 550 to 1089 (KQKPRYEIRW…SSDLVEDSFL (540 aa)). A phosphotyrosine; by autocatalysis mark is found at Y572 and Y574. Positions 593-954 (LVLGRVLGSG…HLSEIVENLL (362 aa)) constitute a Protein kinase domain. Residues 599–607 (LGSGAFGKV) and K627 each bind ATP. Phosphotyrosine; by autocatalysis occurs at positions 720, 731, 742, 754, 762, and 768. D818 serves as the catalytic Proton acceptor. Residues Y849, Y988, and Y1018 each carry the phosphotyrosine; by autocatalysis modification. The segment at 1018-1089 (YIIPLPDIDP…SSDLVEDSFL (72 aa)) is disordered. Residues 1041–1059 (SSQTSEESAIETGSSSSTF) show a composition bias toward polar residues. Residues 1065–1089 (ETIEDIDMMDDIGIDSSDLVEDSFL) are compositionally biased toward acidic residues.

Belongs to the protein kinase superfamily. Tyr protein kinase family. CSF-1/PDGF receptor subfamily. In terms of assembly, interacts with homodimeric PDGFA, PDGFB and PDGFC, and with heterodimers formed by PDGFA and PDGFB. Monomer in the absence of bound ligand. Interaction with dimeric PDGFA, PDGFB and/or PDGFC leads to receptor dimerization, where both PDGFRA homodimers and heterodimers with PDGFRB are observed. Interacts (tyrosine phosphorylated) with SHB (via SH2 domain). Interacts (tyrosine phosphorylated) with SHF (via SH2 domain). Interacts (tyrosine phosphorylated) with SRC (via SH2 domain). Interacts (tyrosine phosphorylated) with PIK3R1. Interacts (tyrosine phosphorylated) with PLCG1 (via SH2 domain). Interacts (tyrosine phosphorylated) with CRK, GRB2 and GRB7. Interacts with CD248; this interaction promotes PDGF receptor signaling pathway. As to quaternary structure, (Microbial infection) Interacts with human cytomegalovirus/HHV-5 envelope glycoprotein B/gB. Also interacts with the trimeric complex gH-gL-gO. Trimer-PDGFRA interaction has an inhibitory effect on PDGFRA signaling. N-glycosylated. In terms of processing, ubiquitinated, leading to its internalization and degradation. Post-translationally, autophosphorylated on tyrosine residues upon ligand binding. Autophosphorylation occurs in trans, i.e. one subunit of the dimeric receptor phosphorylates tyrosine residues on the other subunit. Phosphorylation at Tyr-731 and Tyr-742 is important for interaction with PIK3R1. Phosphorylation at Tyr-720 and Tyr-754 is important for interaction with PTPN11. Phosphorylation at Tyr-762 is important for interaction with CRK. Phosphorylation at Tyr-572 and Tyr-574 is important for interaction with SRC and SRC family members. Phosphorylation at Tyr-988 and Tyr-1018 is important for interaction with PLCG1. As to expression, detected in platelets (at protein level). Widely expressed. Detected in brain, fibroblasts, smooth muscle, heart, and embryo. Expressed in primary and metastatic colon tumors and in normal colon tissue.

The protein resides in the cell membrane. It is found in the cell projection. Its subcellular location is the cilium. It localises to the golgi apparatus. The enzyme catalyses L-tyrosyl-[protein] + ATP = O-phospho-L-tyrosyl-[protein] + ADP + H(+). With respect to regulation, present in an inactive conformation in the absence of bound ligand. Binding of PDGFA and/or PDGFB leads to dimerization and activation by autophosphorylation on tyrosine residues. Inhibited by imatinib, nilotinib and sorafenib. Its function is as follows. Tyrosine-protein kinase that acts as a cell-surface receptor for PDGFA, PDGFB and PDGFC and plays an essential role in the regulation of embryonic development, cell proliferation, survival and chemotaxis. Depending on the context, promotes or inhibits cell proliferation and cell migration. Plays an important role in the differentiation of bone marrow-derived mesenchymal stem cells. Required for normal skeleton development and cephalic closure during embryonic development. Required for normal development of the mucosa lining the gastrointestinal tract, and for recruitment of mesenchymal cells and normal development of intestinal villi. Plays a role in cell migration and chemotaxis in wound healing. Plays a role in platelet activation, secretion of agonists from platelet granules, and in thrombin-induced platelet aggregation. Binding of its cognate ligands - homodimeric PDGFA, homodimeric PDGFB, heterodimers formed by PDGFA and PDGFB or homodimeric PDGFC -leads to the activation of several signaling cascades; the response depends on the nature of the bound ligand and is modulated by the formation of heterodimers between PDGFRA and PDGFRB. Phosphorylates PIK3R1, PLCG1, and PTPN11. Activation of PLCG1 leads to the production of the cellular signaling molecules diacylglycerol and inositol 1,4,5-trisphosphate, mobilization of cytosolic Ca(2+) and the activation of protein kinase C. Phosphorylates PIK3R1, the regulatory subunit of phosphatidylinositol 3-kinase, and thereby mediates activation of the AKT1 signaling pathway. Mediates activation of HRAS and of the MAP kinases MAPK1/ERK2 and/or MAPK3/ERK1. Promotes activation of STAT family members STAT1, STAT3 and STAT5A and/or STAT5B. Receptor signaling is down-regulated by protein phosphatases that dephosphorylate the receptor and its down-stream effectors, and by rapid internalization of the activated receptor. This Homo sapiens (Human) protein is Platelet-derived growth factor receptor alpha (PDGFRA).